The following is a 723-amino-acid chain: Dipeptidyl aminopeptidase BI (723 aa).

The first 23 residues, 1–23, serve as a signal peptide directing secretion; that stretch reads MKPTSLLLAATVLMSTPITSALA. Active-site charge relay system residues include Ser-574, Asp-659, and His-694.

It belongs to the peptidase S9A family. Monomer.

Its activity is regulated as follows. Nearly completely inhibited by 0.5 mM ZnCl(2), 0.1 mM N-tosyl-L-lysyl chloromethyl ketone (TLCK) and 0.1 mM leupeptin. Strongly inhibited by 0.5 mM CoCl(2) and 0.1 mM chymostatin. Activity is hardly affected by general serine protease inhibitors phenylmethanesulfonyl fluoride (PMSF), diisopropyl fluorophosphate (DFP) and N-tosyl-L-phenyl-alanyl chloromethyl ketone (TPCK) or by aspartyl protease inhibitor pepstatin A or by CaCl(2) and EDTA. Cysteine protease inhibitors, such as N-ethylmaleimide (NEM), iodoacetic acid and L-trans-epoxysuccinyl-leucylamido(4-guanido)butane (E-64) have no effect on activity. Sequentially removes dipeptide units (NH3-P2-P1-) from the amino termini of peptides and proteins. Is able to catalyze the removal of Asp-Arg from the amino termini of angiotensins I and II. Has slight endopeptidase activity on N-terminally blocked peptide derivatives which contain arginine residues at the P1 position. Does not hydrolyze Ala-Ala-Ala and Ala-Ala-Ala-Ala substrates or insulin beta chain. The polypeptide is Dipeptidyl aminopeptidase BI (Pseudoxanthomonas mexicana).